A 188-amino-acid chain; its full sequence is Probable nicotinate-nucleotide adenylyltransferase (188 aa).

Belongs to the NadD family.

The catalysed reaction is nicotinate beta-D-ribonucleotide + ATP + H(+) = deamido-NAD(+) + diphosphate. The protein operates within cofactor biosynthesis; NAD(+) biosynthesis; deamido-NAD(+) from nicotinate D-ribonucleotide: step 1/1. Functionally, catalyzes the reversible adenylation of nicotinate mononucleotide (NaMN) to nicotinic acid adenine dinucleotide (NaAD). The chain is Probable nicotinate-nucleotide adenylyltransferase from Solibacter usitatus (strain Ellin6076).